Consider the following 126-residue polypeptide: Fatty acid-binding protein, liver (126 aa).

A2 is modified (N-acetylalanine).

This sequence belongs to the calycin superfamily. Fatty-acid binding protein (FABP) family. As to expression, liver.

The protein resides in the cytoplasm. Functionally, binds free fatty acids and their coenzyme A derivatives, bilirubin, and some other small molecules in the cytoplasm. May be involved in intracellular lipid transport this L-FABP binds only one fatty acid/molecule. Has more affinity for trans-parinaric acid than for cis-parinaric acid. In Rhamdia sapo (South American catfish), this protein is Fatty acid-binding protein, liver (fabp1).